The chain runs to 203 residues: Large ribosomal subunit protein eL15 (203 aa).

A disordered region spans residues 160–186; the sequence is ESRGLTSTGKRSRGLNKGHRYNKTRAG. The span at 169–186 shows a compositional bias: basic residues; sequence KRSRGLNKGHRYNKTRAG.

Belongs to the eukaryotic ribosomal protein eL15 family. In terms of assembly, component of the large ribosomal subunit (LSU). Mature N.crassa ribosomes consist of a small (40S) and a large (60S) subunit. The 40S small subunit contains 1 molecule of ribosomal RNA (18S rRNA) and at least 32 different proteins. The large 60S subunit contains 3 rRNA molecules (26S, 5.8S and 5S rRNA) and at least 42 different proteins.

The protein localises to the cytoplasm. Its function is as follows. Component of the ribosome, a large ribonucleoprotein complex responsible for the synthesis of proteins in the cell. The small ribosomal subunit (SSU) binds messenger RNAs (mRNAs) and translates the encoded message by selecting cognate aminoacyl-transfer RNA (tRNA) molecules. The large subunit (LSU) contains the ribosomal catalytic site termed the peptidyl transferase center (PTC), which catalyzes the formation of peptide bonds, thereby polymerizing the amino acids delivered by tRNAs into a polypeptide chain. The nascent polypeptides leave the ribosome through a tunnel in the LSU and interact with protein factors that function in enzymatic processing, targeting, and the membrane insertion of nascent chains at the exit of the ribosomal tunnel. The chain is Large ribosomal subunit protein eL15 (rpl-15) from Neurospora crassa (strain ATCC 24698 / 74-OR23-1A / CBS 708.71 / DSM 1257 / FGSC 987).